The following is a 232-amino-acid chain: LexA repressor (232 aa).

A DNA-binding region (H-T-H motif) is located at residues 26–46 (FDEMKDALDLRSKSGIHRLIT). Active-site for autocatalytic cleavage activity residues include Ser153 and Lys191.

This sequence belongs to the peptidase S24 family. In terms of assembly, homodimer.

The catalysed reaction is Hydrolysis of Ala-|-Gly bond in repressor LexA.. Functionally, represses a number of genes involved in the response to DNA damage (SOS response), including recA and lexA. In the presence of single-stranded DNA, RecA interacts with LexA causing an autocatalytic cleavage which disrupts the DNA-binding part of LexA, leading to derepression of the SOS regulon and eventually DNA repair. This chain is LexA repressor, found in Bradyrhizobium sp. (strain ORS 278).